The chain runs to 1399 residues: DNA-directed RNA polymerase subunit beta' (1399 aa).

Zn(2+) is bound by residues Cys-70, Cys-72, Cys-85, and Cys-88. Residues Asp-460, Asp-462, and Asp-464 each contribute to the Mg(2+) site. Positions 814, 888, 895, and 898 each coordinate Zn(2+).

It belongs to the RNA polymerase beta' chain family. The RNAP catalytic core consists of 2 alpha, 1 beta, 1 beta' and 1 omega subunit. When a sigma factor is associated with the core the holoenzyme is formed, which can initiate transcription. It depends on Mg(2+) as a cofactor. The cofactor is Zn(2+).

The enzyme catalyses RNA(n) + a ribonucleoside 5'-triphosphate = RNA(n+1) + diphosphate. Its function is as follows. DNA-dependent RNA polymerase catalyzes the transcription of DNA into RNA using the four ribonucleoside triphosphates as substrates. The sequence is that of DNA-directed RNA polymerase subunit beta' from Pseudomonas syringae pv. syringae (strain B728a).